The sequence spans 237 residues: Bax inhibitor 1 (237 aa).

Residues 1 to 29 (MNIFDRKINFDALLKFSHITPSTQQHLKK) lie on the Cytoplasmic side of the membrane. Residue Lys-7 forms a Glycyl lysine isopeptide (Lys-Gly) (interchain with G-Cter in ubiquitin) linkage. Residues 30–50 (VYASFALCMFVAAAGAYVHVV) form a helical membrane-spanning segment. The Lumenal portion of the chain corresponds to 51–52 (TR). A helical transmembrane segment spans residues 53–73 (FIQAGLLSALGALALMICLMA). Over 74 to 86 (TPHSHETEQKRLG) the chain is Cytoplasmic. Residues 87–107 (LLAGFAFLTGVGLGPALELCI) traverse the membrane as a helical segment. Residues 108–112 (AINPS) lie on the Lumenal side of the membrane. Residues 113–133 (ILPTAFMGTAMIFTCFSLSAL) traverse the membrane as a helical segment. Topologically, residues 134-139 (YARRRS) are cytoplasmic. A helical membrane pass occupies residues 140–160 (YLFLGGILMSAMSLMFVSSLG). Topologically, residues 161–166 (NLFFGS) are lumenal. A helical transmembrane segment spans residues 167 to 187 (IWLFQANLYMGLLVMCGFVLF). The Cytoplasmic portion of the chain corresponds to 188–206 (DTQLIIEKAEHGDKDYIWH). An intramembrane region (helical) is located at residues 207 to 227 (CIDLFLDFVTLFRKLMLILAF). Residues 228–237 (NEKDKKKEKK) lie on the Cytoplasmic side of the membrane.

It belongs to the BI1 family. Interacts with BCL2 and BCL2L1. Interacts with ERN1. Ubiquitinated by BFAR, leading to proteasomal degradation. In terms of tissue distribution, highly abundant in adult testis.

The protein resides in the endoplasmic reticulum membrane. Its function is as follows. Endoplasmic reticulum (ER)-resident protein that confers cellular protection as an anti-apoptotic protein by limiting multiple stress-inducing pathways surrounding the endoplasmic reticulum and mitochondria. Inhibits the activities of the key sensor for the endoplasmic reticulum unfolded protein response IRE1alpha/ERN1 both directly and by blocking BAX/BAK binding. Modulates ER calcium homeostasis by acting as a calcium-leak channel. Negatively regulates autophagy and autophagosome formation, especially during periods of nutrient deprivation, and reduces cell survival during starvation. The chain is Bax inhibitor 1 (Tmbim6) from Rattus norvegicus (Rat).